Reading from the N-terminus, the 126-residue chain is MARIAGVDLPRDKRVEIGLTYIYGIGLTRSQHILAETGVNPDTRIRELTDADISALRTAVEAYQVEGDLRRLENMNIKRLQDIGCYRGRRHRMGLPVRGQRTRTNARTRRGGRRTVAGKKKAPAKK.

The segment at 92-126 (RMGLPVRGQRTRTNARTRRGGRRTVAGKKKAPAKK) is disordered. The span at 100-126 (QRTRTNARTRRGGRRTVAGKKKAPAKK) shows a compositional bias: basic residues.

Belongs to the universal ribosomal protein uS13 family. In terms of assembly, part of the 30S ribosomal subunit. Forms a loose heterodimer with protein S19. Forms two bridges to the 50S subunit in the 70S ribosome.

Its function is as follows. Located at the top of the head of the 30S subunit, it contacts several helices of the 16S rRNA. In the 70S ribosome it contacts the 23S rRNA (bridge B1a) and protein L5 of the 50S subunit (bridge B1b), connecting the 2 subunits; these bridges are implicated in subunit movement. Contacts the tRNAs in the A and P-sites. The chain is Small ribosomal subunit protein uS13 from Cyanothece sp. (strain PCC 7425 / ATCC 29141).